The sequence spans 189 residues: Potassium-transporting ATPase KdpC subunit (189 aa).

A helical membrane pass occupies residues 5 to 25 (LLPALTMLLVFTVITGIVYPL).

Belongs to the KdpC family. In terms of assembly, the system is composed of three essential subunits: KdpA, KdpB and KdpC.

It is found in the cell membrane. Functionally, part of the high-affinity ATP-driven potassium transport (or Kdp) system, which catalyzes the hydrolysis of ATP coupled with the electrogenic transport of potassium into the cytoplasm. This subunit acts as a catalytic chaperone that increases the ATP-binding affinity of the ATP-hydrolyzing subunit KdpB by the formation of a transient KdpB/KdpC/ATP ternary complex. The polypeptide is Potassium-transporting ATPase KdpC subunit (Mycobacterium bovis (strain ATCC BAA-935 / AF2122/97)).